Consider the following 243-residue polypeptide: NAD(P)H-quinone oxidoreductase subunit K (243 aa).

Cys59, Cys60, Cys124, and Cys155 together coordinate [4Fe-4S] cluster.

It belongs to the complex I 20 kDa subunit family. NDH-1 can be composed of about 15 different subunits; different subcomplexes with different compositions have been identified which probably have different functions. [4Fe-4S] cluster is required as a cofactor.

The protein resides in the cellular thylakoid membrane. The enzyme catalyses a plastoquinone + NADH + (n+1) H(+)(in) = a plastoquinol + NAD(+) + n H(+)(out). The catalysed reaction is a plastoquinone + NADPH + (n+1) H(+)(in) = a plastoquinol + NADP(+) + n H(+)(out). Functionally, NDH-1 shuttles electrons from an unknown electron donor, via FMN and iron-sulfur (Fe-S) centers, to quinones in the respiratory and/or the photosynthetic chain. The immediate electron acceptor for the enzyme in this species is believed to be plastoquinone. Couples the redox reaction to proton translocation, and thus conserves the redox energy in a proton gradient. Cyanobacterial NDH-1 also plays a role in inorganic carbon-concentration. This Picosynechococcus sp. (strain ATCC 27264 / PCC 7002 / PR-6) (Agmenellum quadruplicatum) protein is NAD(P)H-quinone oxidoreductase subunit K.